The sequence spans 273 residues: Putative methyltransferase Cher3 (273 aa).

Positions 1-273 (MTSERNTDIE…VKPQRIFRKS (273 aa)) constitute a CheR-type methyltransferase domain. S-adenosyl-L-methionine contacts are provided by residues serine 76, arginine 80, glutamate 114, aspartate 137, 199-200 (SL), and 215-216 (RN).

The protein is Putative methyltransferase Cher3 (cheR3) of Pseudomonas putida (strain ATCC 47054 / DSM 6125 / CFBP 8728 / NCIMB 11950 / KT2440).